The chain runs to 1382 residues: ABC-type transporter atr1 (1382 aa).

Residues 1–12 (MRFRSDSRADHQ) show a composition bias toward basic and acidic residues. The segment at 1–56 (MRFRSDSRADHQHPKKQGSMDPDTIQALKYQDRSSSSSSNNKPKEKVGSASTSPSP) is disordered. Asn-62 carries an N-linked (GlcNAc...) asparagine glycan. 6 helical membrane-spanning segments follow: residues 101-121 (LFGT…NIFI), 159-179 (LILL…MAVF), 233-253 (LPMA…AFAF), 259-279 (LVLL…GALT), 339-359 (GVGV…AFFY), and 374-394 (IVSV…LFSM). The region spanning 101–400 (LFGTGMAIAA…LFSMIENFTM (300 aa)) is the ABC transmembrane type-1 1 domain. N-linked (GlcNAc...) asparagine glycosylation is present at Asn-397. The ABC transporter 1 domain maps to 445 to 688 (LKLDHVHFAY…PNGTFASMLR (244 aa)). 480–487 (GLSGSGKS) provides a ligand contact to ATP. The N-linked (GlcNAc...) asparagine glycan is linked to Asn-680. Positions 738–768 (SVKPKDPSKNFEPPGESYASPAADGVKQDAP) are disordered. In terms of domain architecture, ABC transmembrane type-1 2 spans 797–1094 (LGSLCAAIIG…IFNYSADFSS (298 aa)). A helical transmembrane segment spans residues 800-820 (LCAAIIGAVYPVYAILFGTAI). Asn-827 carries an N-linked (GlcNAc...) asparagine glycan. The chain crosses the membrane as a helical span at residues 848 to 868 (ISSGSFFIVAVGCAFISFYHV). A glycan (N-linked (GlcNAc...) asparagine) is linked at Asn-903. 2 helical membrane-spanning segments follow: residues 911–931 (SLSV…GSIV) and 951–973 (LALV…LRVL). N-linked (GlcNAc...) asparagine glycosylation is present at Asn-1020. The next 2 membrane-spanning stretches (helical) occupy residues 1034-1054 (VLFG…FWYG) and 1067-1087 (GFFT…NIFN). The region spanning 1136-1377 (IALKEVTFRY…DGLFALMARL (242 aa)) is the ABC transporter 2 domain. Position 1171 to 1178 (1171 to 1178 (GGSGSGKS)) interacts with ATP. Residue Asn-1324 is glycosylated (N-linked (GlcNAc...) asparagine).

It belongs to the ABC transporter superfamily. ABCB family. Multidrug resistance exporter (TC 3.A.1.201) subfamily.

Its subcellular location is the cell membrane. In terms of biological role, ABC-type transporter; part of the gene cluster that mediates the biosynthesis of the glycolipid biosurfactant ustilagic acid (UA). UA is a secreted cellobiose glycolipid that is toxic for many microorganisms and confers biocontrol activity to U.maydis. Export of UA is presumably catalyzed by the ABC transporter atr1. Atr1 appears to be quite unspecific, as many of the UA derivatives produced by cluster mutant strains are readily exported. The protein is ABC-type transporter atr1 of Mycosarcoma maydis (Corn smut fungus).